A 178-amino-acid polypeptide reads, in one-letter code: Cytochrome b6-f complex iron-sulfur subunit (178 aa).

A helical transmembrane segment spans residues 20–42; it reads LLTFGSVTGVALGALYPVVNYFI. The 97-residue stretch at 65-161 folds into the Rieske domain; it reads ATGWLSSHPE…VSVENDNVFV (97 aa). Residues C107, H109, C125, and H128 each contribute to the [2Fe-2S] cluster site. A disulfide bridge connects residues C112 and C127.

This sequence belongs to the Rieske iron-sulfur protein family. As to quaternary structure, the 4 large subunits of the cytochrome b6-f complex are cytochrome b6, subunit IV (17 kDa polypeptide, PetD), cytochrome f and the Rieske protein, while the 4 small subunits are PetG, PetL, PetM and PetN. The complex functions as a dimer. Requires [2Fe-2S] cluster as cofactor.

The protein localises to the cellular thylakoid membrane. It catalyses the reaction 2 oxidized [plastocyanin] + a plastoquinol + 2 H(+)(in) = 2 reduced [plastocyanin] + a plastoquinone + 4 H(+)(out). Its function is as follows. Component of the cytochrome b6-f complex, which mediates electron transfer between photosystem II (PSII) and photosystem I (PSI), cyclic electron flow around PSI, and state transitions. This Parasynechococcus marenigrum (strain WH8102) protein is Cytochrome b6-f complex iron-sulfur subunit.